Consider the following 554-residue polypeptide: Undecaprenyl phosphate-alpha-4-amino-4-deoxy-L-arabinose arabinosyl transferase (554 aa).

11 consecutive transmembrane segments (helical) span residues 4-24, 87-107, 115-135, 178-198, 206-226, 262-282, 293-313, 315-335, 352-372, 384-404, and 410-430; these read LKGS…LLPI, FGSI…ATLL, FLAA…SYAV, FMTK…PIVI, LIIF…PWAL, YLPI…AALL, ELFF…VAKG, LPTY…AYAT, INLI…MGWV, QKVI…FATM, and HWHW…YLIP.

It belongs to the glycosyltransferase 83 family.

Its subcellular location is the cell inner membrane. The catalysed reaction is 4-amino-4-deoxy-alpha-L-arabinopyranosyl di-trans,octa-cis-undecaprenyl phosphate + lipid IVA = lipid IIA + di-trans,octa-cis-undecaprenyl phosphate.. It participates in lipopolysaccharide metabolism; 4-amino-4-deoxy-beta-L-arabinose-lipid A biosynthesis. Its function is as follows. Catalyzes the transfer of the L-Ara4N moiety of the glycolipid undecaprenyl phosphate-alpha-L-Ara4N to lipid A. The modified arabinose is attached to lipid A and is required for resistance to polymyxin and cationic antimicrobial peptides. The protein is Undecaprenyl phosphate-alpha-4-amino-4-deoxy-L-arabinose arabinosyl transferase of Yersinia enterocolitica serotype O:8 / biotype 1B (strain NCTC 13174 / 8081).